The primary structure comprises 195 residues: Ribonuclease HII (195 aa).

One can recognise an RNase H type-2 domain in the interval 6 to 195; that stretch reads SLIAGVDEVG…KSFISRLKKN (190 aa). D12, E13, and D108 together coordinate a divalent metal cation.

The protein belongs to the RNase HII family. The cofactor is Mn(2+). Mg(2+) is required as a cofactor.

It is found in the cytoplasm. It catalyses the reaction Endonucleolytic cleavage to 5'-phosphomonoester.. Its function is as follows. Endonuclease that specifically degrades the RNA of RNA-DNA hybrids. The sequence is that of Ribonuclease HII from Prochlorococcus marinus (strain NATL2A).